Here is a 553-residue protein sequence, read N- to C-terminus: Dihydrolipoyllysine-residue acetyltransferase component of pyruvate dehydrogenase complex (553 aa).

The region spanning 4 to 78 (AIEIKVPDIG…SEGSVLVMLE (75 aa)) is the Lipoyl-binding 1 domain. Residue Lys-44 is modified to N6-lipoyllysine. The tract at residues 97–118 (AAAAPAPAPAPAAAPAAAPAAG) is disordered. The Lipoyl-binding 2 domain occupies 122–196 (TIEVKVPDIG…AEGTLLLILE (75 aa)). Position 162 is an N6-lipoyllysine (Lys-162). The 38-residue stretch at 250 to 287 (HASPSVRKFARELGVDVSRVPGTGPKGRITQEDVQGYV) folds into the Peripheral subunit-binding (PSBD) domain. His-526 is a catalytic residue.

This sequence belongs to the 2-oxoacid dehydrogenase family. As to quaternary structure, forms a 24-polypeptide structural core with octahedral symmetry. It depends on (R)-lipoate as a cofactor.

It catalyses the reaction N(6)-[(R)-dihydrolipoyl]-L-lysyl-[protein] + acetyl-CoA = N(6)-[(R)-S(8)-acetyldihydrolipoyl]-L-lysyl-[protein] + CoA. The pyruvate dehydrogenase complex catalyzes the overall conversion of pyruvate to acetyl-CoA and CO(2). It contains multiple copies of three enzymatic components: pyruvate dehydrogenase (E1), dihydrolipoamide acetyltransferase (E2) and lipoamide dehydrogenase (E3). The polypeptide is Dihydrolipoyllysine-residue acetyltransferase component of pyruvate dehydrogenase complex (pdhB) (Cupriavidus necator (strain ATCC 17699 / DSM 428 / KCTC 22496 / NCIMB 10442 / H16 / Stanier 337) (Ralstonia eutropha)).